The chain runs to 20 residues: Cytochrome c oxidase subunit 8B, mitochondrial (20 aa).

The segment at 1–20 is disordered; that stretch reads LSGKPAKXHLSVGEQAIAMT.

This sequence belongs to the cytochrome c oxidase VIII family. Component of the cytochrome c oxidase (complex IV, CIV), a multisubunit enzyme composed of 14 subunits. The complex is composed of a catalytic core of 3 subunits MT-CO1, MT-CO2 and MT-CO3, encoded in the mitochondrial DNA, and 11 supernumerary subunits COX4I, COX5A, COX5B, COX6A, COX6B, COX6C, COX7A, COX7B, COX7C, COX8 and NDUFA4, which are encoded in the nuclear genome. The complex exists as a monomer or a dimer and forms supercomplexes (SCs) in the inner mitochondrial membrane with NADH-ubiquinone oxidoreductase (complex I, CI) and ubiquinol-cytochrome c oxidoreductase (cytochrome b-c1 complex, complex III, CIII), resulting in different assemblies (supercomplex SCI(1)III(2)IV(1) and megacomplex MCI(2)III(2)IV(2)).

The protein localises to the mitochondrion inner membrane. Its pathway is energy metabolism; oxidative phosphorylation. Component of the cytochrome c oxidase, the last enzyme in the mitochondrial electron transport chain which drives oxidative phosphorylation. The respiratory chain contains 3 multisubunit complexes succinate dehydrogenase (complex II, CII), ubiquinol-cytochrome c oxidoreductase (cytochrome b-c1 complex, complex III, CIII) and cytochrome c oxidase (complex IV, CIV), that cooperate to transfer electrons derived from NADH and succinate to molecular oxygen, creating an electrochemical gradient over the inner membrane that drives transmembrane transport and the ATP synthase. Cytochrome c oxidase is the component of the respiratory chain that catalyzes the reduction of oxygen to water. Electrons originating from reduced cytochrome c in the intermembrane space (IMS) are transferred via the dinuclear copper A center (CU(A)) of subunit 2 and heme A of subunit 1 to the active site in subunit 1, a binuclear center (BNC) formed by heme A3 and copper B (CU(B)). The BNC reduces molecular oxygen to 2 water molecules using 4 electrons from cytochrome c in the IMS and 4 protons from the mitochondrial matrix. The sequence is that of Cytochrome c oxidase subunit 8B, mitochondrial from Oncorhynchus mykiss (Rainbow trout).